Consider the following 215-residue polypeptide: Small ribosomal subunit protein eS1 (215 aa).

Belongs to the eukaryotic ribosomal protein eS1 family.

This is Small ribosomal subunit protein eS1 from Halorubrum lacusprofundi (strain ATCC 49239 / DSM 5036 / JCM 8891 / ACAM 34).